Consider the following 165-residue polypeptide: Nucleotide-binding protein Tfu_2672 (165 aa).

This sequence belongs to the YajQ family.

Nucleotide-binding protein. This Thermobifida fusca (strain YX) protein is Nucleotide-binding protein Tfu_2672.